Reading from the N-terminus, the 254-residue chain is MLSLVGLGPGRGYVTEAAAEAIKNADCVFYEDYTAPLDVEALRRLARGEPIRLTRADLEDHSGRKIFECLKEGKRAVLVTGGDPMLATAHAAILALARRRGYRVEVVPGVSIICAAFSLSCLSIYKLGGVATVTYPRGGVYSTRPYDLVEQNLQRGLHTLLLLDVREDGRFMPPREGAEVLLQLEERVGRGLFKEDLPIVVVYKVGWGGSAVYATLGEIARSDLEGPAVFIVPSRLGPVEKECLEGLSARSSTR.

S-adenosyl-L-methionine contacts are provided by residues D83, L86, 111-112 (SI), L163, and V205.

It belongs to the diphthine synthase family. As to quaternary structure, homodimer.

The enzyme catalyses 2-[(3S)-amino-3-carboxypropyl]-L-histidyl-[translation elongation factor 2] + 3 S-adenosyl-L-methionine = diphthine-[translation elongation factor 2] + 3 S-adenosyl-L-homocysteine + 3 H(+). Its pathway is protein modification; peptidyl-diphthamide biosynthesis. S-adenosyl-L-methionine-dependent methyltransferase that catalyzes the trimethylation of the amino group of the modified target histidine residue in translation elongation factor 2 (EF-2), to form an intermediate called diphthine. The three successive methylation reactions represent the second step of diphthamide biosynthesis. The chain is Diphthine synthase from Pyrobaculum aerophilum (strain ATCC 51768 / DSM 7523 / JCM 9630 / CIP 104966 / NBRC 100827 / IM2).